The following is a 117-amino-acid chain: uncharacterized protein (117 aa).

This is an uncharacterized protein from Methanocaldococcus jannaschii (strain ATCC 43067 / DSM 2661 / JAL-1 / JCM 10045 / NBRC 100440) (Methanococcus jannaschii).